Consider the following 278-residue polypeptide: 4-hydroxy-tetrahydrodipicolinate reductase (278 aa).

NAD(+)-binding positions include 16-21 (GAGGRM) and Glu42. Arg43 lines the NADP(+) pocket. NAD(+) is bound by residues 106 to 108 (GTT) and 130 to 133 (AGNY). Residue His163 is the Proton donor/acceptor of the active site. A (S)-2,3,4,5-tetrahydrodipicolinate-binding site is contributed by His164. The Proton donor role is filled by Lys167. 173–174 (GT) is a binding site for (S)-2,3,4,5-tetrahydrodipicolinate.

Belongs to the DapB family.

It localises to the cytoplasm. It catalyses the reaction (S)-2,3,4,5-tetrahydrodipicolinate + NAD(+) + H2O = (2S,4S)-4-hydroxy-2,3,4,5-tetrahydrodipicolinate + NADH + H(+). It carries out the reaction (S)-2,3,4,5-tetrahydrodipicolinate + NADP(+) + H2O = (2S,4S)-4-hydroxy-2,3,4,5-tetrahydrodipicolinate + NADPH + H(+). The protein operates within amino-acid biosynthesis; L-lysine biosynthesis via DAP pathway; (S)-tetrahydrodipicolinate from L-aspartate: step 4/4. In terms of biological role, catalyzes the conversion of 4-hydroxy-tetrahydrodipicolinate (HTPA) to tetrahydrodipicolinate. The polypeptide is 4-hydroxy-tetrahydrodipicolinate reductase (Psychrobacter arcticus (strain DSM 17307 / VKM B-2377 / 273-4)).